The chain runs to 316 residues: MSSATFLSVMAGLSGIVVFGALISVFHIYSDINSFVEDSHRELGEFKGFANDAWNSMINQDDSVRMARSVFGRRRQKKQSQCNCGQQASNCPAGPPGPPGASGDKGHDGQPGQAGKPGQPGVAGPSHHQKQECIKCPQGLPGPAGVPGQPGPKGPNGNPGAPAQGGGQGPPGPPGPAGSAGSPGQAGAPGNPGSPGKSGQRGRGLPGPSGAPGPQGPPGAPGQPGSGNAPGPAGPPGPAGPNGQPGHPGQDGQPGAPGNDGTPGSDAAYCPCPTRSSVLRHRNVNRHRAAASKKRVVAKKRVAKKRVVAARRHVQA.

The N-terminal stretch at 1-34 (MSSATFLSVMAGLSGIVVFGALISVFHIYSDINS) is a signal peptide. Disordered regions lie at residues 78 to 269 (KQSQ…DAAY) and 281 to 316 (HRNV…HVQA). The segment covering 79–90 (QSQCNCGQQASN) has biased composition (polar residues). Triple-helical region regions lie at residues 94-126 (GPPG…AGPS), 139-198 (GLPG…PGKS), and 204-263 (GLPG…DGTP). Low complexity-rich tracts occupy residues 110 to 125 (QPGQ…VAGP), 137 to 147 (PQGLPGPAGVP), and 177 to 198 (AGSA…PGKS). The span at 209-221 (SGAPGPQGPPGAP) shows a compositional bias: pro residues. A compositionally biased stretch (low complexity) spans 241 to 260 (PNGQPGHPGQDGQPGAPGND).

The protein belongs to the cuticular collagen family. Collagen polypeptide chains are complexed within the cuticle by disulfide bonds and other types of covalent cross-links.

Functionally, nematode cuticles are composed largely of collagen-like proteins. The cuticle functions both as an exoskeleton and as a barrier to protect the worm from its environment. This is Cuticle collagen 7 (col-7) from Caenorhabditis elegans.